Here is a 61-residue protein sequence, read N- to C-terminus: Large ribosomal subunit protein uL30 (61 aa).

The protein belongs to the universal ribosomal protein uL30 family. As to quaternary structure, part of the 50S ribosomal subunit.

In Corynebacterium jeikeium (strain K411), this protein is Large ribosomal subunit protein uL30.